Reading from the N-terminus, the 636-residue chain is Poly(3-hydroxyalkanoate) polymerase subunit PhaC (636 aa).

Disordered regions lie at residues 1 to 38 and 129 to 152; these read MYNKRIKRVLPPEEMVTDSKQESGGQKNGDKTGFDATD and QGTRGMQGEPLPPEPDTRKDKRFS. A compositionally biased stretch (basic and acidic residues) spans 143–152; sequence PDTRKDKRFS. Cys373 is an active-site residue.

Belongs to the PHA/PHB synthase family. Type I PhaC subfamily.

It is found in the cytoplasm. The catalysed reaction is (3R)-3-hydroxybutanoyl-CoA + [(3R)-hydroxybutanoate](n) = [(3R)-hydroxybutanoate](n+1) + CoA. The protein operates within biopolymer metabolism; poly-(R)-3-hydroxybutanoate biosynthesis. Its function is as follows. Polymerizes D(-)-3-hydroxybutyryl-CoA to create PHB which consists of thousands of hydroxybutyrate molecules linked end to end. PHB serves as an intracellular energy reserve material when cells grow under conditions of nutrient limitation. The protein is Poly(3-hydroxyalkanoate) polymerase subunit PhaC of Rhizobium etli (strain ATCC 51251 / DSM 11541 / JCM 21823 / NBRC 15573 / CFN 42).